Reading from the N-terminus, the 359-residue chain is Nicotinate-nucleotide--dimethylbenzimidazole phosphoribosyltransferase (359 aa).

Catalysis depends on E318, which acts as the Proton acceptor.

It belongs to the CobT family. As to quaternary structure, homodimer.

The enzyme catalyses 5,6-dimethylbenzimidazole + nicotinate beta-D-ribonucleotide = alpha-ribazole 5'-phosphate + nicotinate + H(+). It participates in nucleoside biosynthesis; alpha-ribazole biosynthesis; alpha-ribazole from 5,6-dimethylbenzimidazole: step 1/2. Its function is as follows. Catalyzes the synthesis of alpha-ribazole-5'-phosphate from nicotinate mononucleotide (NAMN) and 5,6-dimethylbenzimidazole (DMB). The polypeptide is Nicotinate-nucleotide--dimethylbenzimidazole phosphoribosyltransferase (Escherichia coli O17:K52:H18 (strain UMN026 / ExPEC)).